Here is a 522-residue protein sequence, read N- to C-terminus: Cytochrome P450 4e5, mitochondrial (522 aa).

Heme-binding residues include Glu307 and Cys443.

Belongs to the cytochrome P450 family. Heme is required as a cofactor.

It is found in the mitochondrion. Its function is as follows. Probably involved in steroid hormones biosynthesis. This is Cytochrome P450 4e5, mitochondrial (Cyp4e5) from Drosophila mettleri (Fruit fly).